The following is a 347-amino-acid chain: Pre-B-cell leukemia transcription factor 1 (347 aa).

Residues 1–37 (MDDQPRLMHSHPGVGMAGHPSLSQHMQDGTGANEGDV) are disordered. Residues 38–232 (GRKQDIGDIL…VMILRSRFLD (195 aa)) form the PBC domain. The interval 45–124 (DILQQIMTIT…EGVAGPEKGG (80 aa)) is PBC-A. The interval 127 to 232 (AAAAAAAAAS…VMILRSRFLD (106 aa)) is PBC-B. The segment at residues 233-295 (ARRKRRNFNK…NKRIRYKKNI (63 aa)) is a DNA-binding region (homeobox; TALE-type). A compositionally biased stretch (polar residues) spans 318-331 (VHGSQANSPSTPSS). Residues 318–347 (VHGSQANSPSTPSSAGGYPSPCYQSDRRIQ) form a disordered region.

Belongs to the TALE/PBX homeobox family. As to quaternary structure, forms a heterodimer with isoform 2 of meis1; the interaction is necessary for neural fate induction. As to expression, shows broad, weak expression from blastula through gastrula stages. At stage 14/15, expressed in a broad arc that gives rise to the forebrain and eyes. More intensely expressed in the lateral neural folds (presumptive neural crest) and as horizontal stripes in the posterior neural plate that give rise to the hindbrain. As development proceeds, expression progresses posteriorly along the neural folds and at stage 21, expression is pronounced in the prospective hindbrain and in migratory neural crest cells. At later stages (stage 26), expression becomes intense within the dorsal portion of the forebrain, and in the optic cup, caudal branchial arch, peripheral to the pronephric anlage, and in the dorsal anterior half of the spinal cord. Expression remains robust in the hindbrain but gradually becomes more restricted. At stage 28, expressed in the dorsal lateral portion of the neural tube and in the somatic layer of the lateral plate mesoderm that surrounds the pronephric anlage.

The protein localises to the nucleus. Acts as a transcriptional activator in complex with isoform 2 of meis1, to induce posterior neural and neural crest gene expression, and thereby specify hindbrain and neural crest cell fate. Binds to a highly conserved region in the promoter of the neural crest gene zic3. Required for the nuclear transport or retention of isoform 2 of meis1. The chain is Pre-B-cell leukemia transcription factor 1 (pbx1) from Xenopus laevis (African clawed frog).